The sequence spans 504 residues: E3 ubiquitin-protein ligase dbl4 (504 aa).

The interval 127–338 (HEGTCEICYD…NNWYTCNRYE (212 aa)) is TRIAD supradomain. Zn(2+)-binding residues include cysteine 131, cysteine 134, cysteine 147, histidine 149, cysteine 152, cysteine 155, cysteine 173, cysteine 178, cysteine 217, cysteine 222, cysteine 244, cysteine 246, cysteine 251, cysteine 254, histidine 259, cysteine 264, cysteine 291, and cysteine 294. Residues 131–178 (CEICYDEGCLPFFSAECDHEFCLACYRQYLDSRISEGESVIQCPEESC) form an RING-type 1 zinc finger. The segment at 197–264 (DRYHRLLDRS…GHDNHQPTIC (68 aa)) adopts an IBR-type zinc-finger fold. An RING-type 2; atypical zinc finger spans residues 291 to 320 (CPKCSTTIEKNGGCNHMTCKKCKYEFCWVC). Cysteine 304 is an active-site residue. Residues cysteine 309, cysteine 312, cysteine 317, cysteine 320, histidine 327, and cysteine 334 each coordinate Zn(2+).

It belongs to the RBR family.

The protein localises to the cytoplasm. The protein resides in the nucleus. It catalyses the reaction [E2 ubiquitin-conjugating enzyme]-S-ubiquitinyl-L-cysteine + [acceptor protein]-L-lysine = [E2 ubiquitin-conjugating enzyme]-L-cysteine + [acceptor protein]-N(6)-ubiquitinyl-L-lysine.. Its pathway is protein modification; protein ubiquitination. Functionally, probable ubiquitin-protein ligase involved in the degradation-related ubiquitination of histones. Contributes to the post-translational regulation of histone protein levels by polyubiquitination of excess histones for subsequent degradation. The protein is E3 ubiquitin-protein ligase dbl4 of Schizosaccharomyces pombe (strain 972 / ATCC 24843) (Fission yeast).